We begin with the raw amino-acid sequence, 95 residues long: Aspartyl/glutamyl-tRNA(Asn/Gln) amidotransferase subunit C (95 aa).

The protein belongs to the GatC family. Heterotrimer of A, B and C subunits.

It catalyses the reaction L-glutamyl-tRNA(Gln) + L-glutamine + ATP + H2O = L-glutaminyl-tRNA(Gln) + L-glutamate + ADP + phosphate + H(+). The catalysed reaction is L-aspartyl-tRNA(Asn) + L-glutamine + ATP + H2O = L-asparaginyl-tRNA(Asn) + L-glutamate + ADP + phosphate + 2 H(+). In terms of biological role, allows the formation of correctly charged Asn-tRNA(Asn) or Gln-tRNA(Gln) through the transamidation of misacylated Asp-tRNA(Asn) or Glu-tRNA(Gln) in organisms which lack either or both of asparaginyl-tRNA or glutaminyl-tRNA synthetases. The reaction takes place in the presence of glutamine and ATP through an activated phospho-Asp-tRNA(Asn) or phospho-Glu-tRNA(Gln). The sequence is that of Aspartyl/glutamyl-tRNA(Asn/Gln) amidotransferase subunit C from Campylobacter fetus subsp. fetus (strain 82-40).